Here is a 367-residue protein sequence, read N- to C-terminus: MYDWFKQMRKESPVYYDGKVWNLFKYEDCKMVLNDHKRFSSNLTGYNDKLEMLRSGKVFFDIPTRYTMLTSDPPLHDELRNLTADAFNPSNLPVDFVREVTVKLLSELDEEFDVIESFAIPLPILVISKMLGINPDVKKVKDWSDLVALRLGRADEIFSIGRKYLELISFSKKELDSRKGKEIVDLTGKIANSNLSELEKEGYFILLMIAGNETTTNLIGNAIEDFTLYNSWDYVREKGALKAVEEALRFSPPVMRTIRVTKEKVKIRDQVIDEGELVRVWIASANRDEEVFKDPDSFIPDRTPNPHLSFGSGIHLCLGAPLARLEARIALEEFAKKFRVKEIVKKEKIDNEVLNGYRKLVVRVERA.

Heme-binding residues include H76, R80, T257, R259, H315, and C317.

This sequence belongs to the cytochrome P450 family. It depends on heme as a cofactor.

Its subcellular location is the cytoplasm. This Sulfurisphaera tokodaii (strain DSM 16993 / JCM 10545 / NBRC 100140 / 7) (Sulfolobus tokodaii) protein is Cytochrome P450 119 (cyp119).